The primary structure comprises 1365 residues: Killer toxin-resistance protein 5 (1365 aa).

An N-terminal signal peptide occupies residues 1-17 (MRLLALVLLLLCAPLRA). Residues Asn115, Asn228, Asn293, Asn457, Asn519, Asn523, Asn644, Asn870, Asn1091, Asn1150, and Asn1195 are each glycosylated (N-linked (GlcNAc...) asparagine). Residues 1334-1365 (FASSPGDEDVPGESVSSKYQDSDNAAPLHDEL) form a disordered region. Positions 1347-1356 (SVSSKYQDSD) are enriched in polar residues. A Prevents secretion from ER motif is present at residues 1362–1365 (HDEL).

It to D.melanogaster UGGG.

The protein resides in the endoplasmic reticulum lumen. In terms of biological role, required for (1-&gt;6)-beta-D-glucan synthesis and normal cell growth. The polypeptide is Killer toxin-resistance protein 5 (KRE5) (Saccharomyces cerevisiae (strain ATCC 204508 / S288c) (Baker's yeast)).